The following is a 145-amino-acid chain: D-aminoacyl-tRNA deacylase (145 aa).

The Gly-cisPro motif, important for rejection of L-amino acids motif lies at Gly137–Pro138.

This sequence belongs to the DTD family. Homodimer.

It localises to the cytoplasm. The catalysed reaction is glycyl-tRNA(Ala) + H2O = tRNA(Ala) + glycine + H(+). It carries out the reaction a D-aminoacyl-tRNA + H2O = a tRNA + a D-alpha-amino acid + H(+). In terms of biological role, an aminoacyl-tRNA editing enzyme that deacylates mischarged D-aminoacyl-tRNAs. Also deacylates mischarged glycyl-tRNA(Ala), protecting cells against glycine mischarging by AlaRS. Acts via tRNA-based rather than protein-based catalysis; rejects L-amino acids rather than detecting D-amino acids in the active site. By recycling D-aminoacyl-tRNA to D-amino acids and free tRNA molecules, this enzyme counteracts the toxicity associated with the formation of D-aminoacyl-tRNA entities in vivo and helps enforce protein L-homochirality. This is D-aminoacyl-tRNA deacylase from Aeromonas hydrophila subsp. hydrophila (strain ATCC 7966 / DSM 30187 / BCRC 13018 / CCUG 14551 / JCM 1027 / KCTC 2358 / NCIMB 9240 / NCTC 8049).